The following is a 156-amino-acid chain: 6,7-dimethyl-8-ribityllumazine synthase (156 aa).

Residues phenylalanine 22, 56–58 (AFE), and 80–82 (AVV) each bind 5-amino-6-(D-ribitylamino)uracil. 85-86 (ET) serves as a coordination point for (2S)-2-hydroxy-3-oxobutyl phosphate. Histidine 88 acts as the Proton donor in catalysis. Phenylalanine 113 contributes to the 5-amino-6-(D-ribitylamino)uracil binding site. A (2S)-2-hydroxy-3-oxobutyl phosphate-binding site is contributed by arginine 127.

The protein belongs to the DMRL synthase family.

The enzyme catalyses (2S)-2-hydroxy-3-oxobutyl phosphate + 5-amino-6-(D-ribitylamino)uracil = 6,7-dimethyl-8-(1-D-ribityl)lumazine + phosphate + 2 H2O + H(+). The protein operates within cofactor biosynthesis; riboflavin biosynthesis; riboflavin from 2-hydroxy-3-oxobutyl phosphate and 5-amino-6-(D-ribitylamino)uracil: step 1/2. In terms of biological role, catalyzes the formation of 6,7-dimethyl-8-ribityllumazine by condensation of 5-amino-6-(D-ribitylamino)uracil with 3,4-dihydroxy-2-butanone 4-phosphate. This is the penultimate step in the biosynthesis of riboflavin. This chain is 6,7-dimethyl-8-ribityllumazine synthase, found in Pediococcus pentosaceus (strain ATCC 25745 / CCUG 21536 / LMG 10740 / 183-1w).